The primary structure comprises 265 residues: uncharacterized protein (265 aa).

A coiled-coil region spans residues 143 to 205 (ATQKALKDSI…EKLIKSVEKA (63 aa)).

This is an uncharacterized protein from Aquifex aeolicus (strain VF5).